Here is a 416-residue protein sequence, read N- to C-terminus: Gamma-glutamyl phosphate reductase (416 aa).

This sequence belongs to the gamma-glutamyl phosphate reductase family.

The protein resides in the cytoplasm. The enzyme catalyses L-glutamate 5-semialdehyde + phosphate + NADP(+) = L-glutamyl 5-phosphate + NADPH + H(+). Its pathway is amino-acid biosynthesis; L-proline biosynthesis; L-glutamate 5-semialdehyde from L-glutamate: step 2/2. Its function is as follows. Catalyzes the NADPH-dependent reduction of L-glutamate 5-phosphate into L-glutamate 5-semialdehyde and phosphate. The product spontaneously undergoes cyclization to form 1-pyrroline-5-carboxylate. This is Gamma-glutamyl phosphate reductase from Streptococcus pyogenes serotype M1.